A 213-amino-acid chain; its full sequence is Large ribosomal subunit protein uL3 (213 aa).

N5-methylglutamine is present on Gln-151.

It belongs to the universal ribosomal protein uL3 family. Part of the 50S ribosomal subunit. Forms a cluster with proteins L14 and L19. Post-translationally, methylated by PrmB.

One of the primary rRNA binding proteins, it binds directly near the 3'-end of the 23S rRNA, where it nucleates assembly of the 50S subunit. The chain is Large ribosomal subunit protein uL3 from Rhizobium etli (strain ATCC 51251 / DSM 11541 / JCM 21823 / NBRC 15573 / CFN 42).